We begin with the raw amino-acid sequence, 90 residues long: Delta-aiptatoxin-Adi1a (90 aa).

The N-terminal stretch at 1–21 (MKTAMLIAVLGFCAALCFVES) is a signal peptide. The propeptide occupies 22 to 44 (SHEEEREAAVYLTDLVSKAESAI). 3 disulfides stabilise this stretch: C50/C86, C52/C77, and C70/C87.

The protein belongs to the sea anemone sodium channel inhibitory toxin family.

The protein localises to the secreted. The protein resides in the nematocyst. Its function is as follows. Cardioactive peptide that acts on voltage-gated sodium channels (hNav1.5/SCN5A) and voltage-gated potassium channels (Kv). The activity on sodium channels consists of inhibition on sodium current inactivation with no significant effect on current activation. This effect may be caused by direct interaction of the toxin with sodium channel site-3. The activity on potassium channels consists of a significant increase of the amplitude of the transient component of the potassium current, shifting the current threshold to more negative membrane potentials. These effects are concentration-dependent and reversible and may be due to a direct interaction between the toxin and the voltage-sensing domain of the channel. Physiologically, this toxin increases the amplitude of cardiomyocyte contraction and slows the late phase of the twitch relaxation velocity with no induction of spontaneous twitching. It increases action potential duration of cardiomyocytes with no effect on its threshold and on the cell resting potential. On insects, it shows neurotoxic activity to the blowfly larvae S.falculaty, causing an immediate spasm that progressed to body contraction and paralysis. The sequence is that of Delta-aiptatoxin-Adi1a from Exaiptasia diaphana (Tropical sea anemone).